Consider the following 257-residue polypeptide: Flagellar brake protein YcgR 2 (257 aa).

In terms of domain architecture, PilZ spans 131–244 (QRREFFRVQT…AERTLQRVVT (114 aa)).

The protein belongs to the YcgR family. In terms of assembly, monomer. Interacts with the flagellar basal bodies.

The protein localises to the bacterial flagellum basal body. Functionally, acts as a flagellar brake, regulating swimming and swarming in a bis-(3'-5') cyclic diguanylic acid (c-di-GMP)-dependent manner. Binds 1 c-di-GMP dimer per subunit. Increasing levels of c-di-GMP lead to decreased motility. The polypeptide is Flagellar brake protein YcgR 2 (Paraburkholderia phytofirmans (strain DSM 17436 / LMG 22146 / PsJN) (Burkholderia phytofirmans)).